The following is a 338-amino-acid chain: Protein SPATA31F3 (338 aa).

Residues 7–29 form a helical membrane-spanning segment; sequence VLWDVGYPLYTYGSICIIALIIW. The residue at position 152 (S152) is a Phosphoserine. Positions 290–306 are enriched in basic and acidic residues; the sequence is DRTKNIEKSPTVTKDHV. The interval 290–338 is disordered; it reads DRTKNIEKSPTVTKDHVWGATTQKTTEDPEAQPPSTEEEGLIFCDAPSA.

Belongs to the SPATA31 family.

Its subcellular location is the membrane. The protein is Protein SPATA31F3 of Homo sapiens (Human).